The following is a 204-amino-acid chain: Nucleoside triphosphate pyrophosphatase (204 aa).

Asp-79 acts as the Proton acceptor in catalysis.

Belongs to the Maf family. A divalent metal cation serves as cofactor.

It localises to the cytoplasm. The enzyme catalyses a ribonucleoside 5'-triphosphate + H2O = a ribonucleoside 5'-phosphate + diphosphate + H(+). It carries out the reaction a 2'-deoxyribonucleoside 5'-triphosphate + H2O = a 2'-deoxyribonucleoside 5'-phosphate + diphosphate + H(+). In terms of biological role, nucleoside triphosphate pyrophosphatase. May have a dual role in cell division arrest and in preventing the incorporation of modified nucleotides into cellular nucleic acids. The chain is Nucleoside triphosphate pyrophosphatase from Trichodesmium erythraeum (strain IMS101).